Here is a 511-residue protein sequence, read N- to C-terminus: ADP,ATP carrier protein 4 (511 aa).

Helical transmembrane passes span 34-54 (VSKF…QNLI), 71-91 (ISFL…AIYV), 102-122 (IFYL…YVIF), 157-177 (FSLF…LLFW), 192-212 (FYPL…QFLE), 231-251 (FHTL…IIAI), 296-316 (LIAT…GPWK), 330-350 (AAFI…FVVL), 361-381 (FTAA…FFAV), 390-410 (LIIA…IGAI), 453-473 (LGKS…PSAS), and 476-496 (SISI…LWAT).

Belongs to the ADP/ATP translocase tlc family.

It localises to the cell membrane. Provides the rickettsial cell with host ATP in exchange for rickettsial ADP. This is an obligate exchange system. This energy acquiring activity is an important component of rickettsial parasitism. This chain is ADP,ATP carrier protein 4 (tlcD), found in Rickettsia felis (strain ATCC VR-1525 / URRWXCal2) (Rickettsia azadi).